The following is a 21-amino-acid chain: FVNTIRLLINKAREWNNKQSS.

S21 bears the Serine amide mark.

In terms of tissue distribution, expressed by the venom gland.

It localises to the secreted. This is Cupiennin-6a from Cupiennius salei (American wandering spider).